Reading from the N-terminus, the 232-residue chain is uncharacterized protein (232 aa).

Disordered regions lie at residues 123–147 (VAGGKHSSNRRPRGTIRAVPGRKYP) and 169–200 (AAADPQERVGPRGRRGLAGQQQCRGRPGPSLR).

Belongs to the mycobacterial PPE family.

This is an uncharacterized protein from Mycobacterium tuberculosis (strain ATCC 25618 / H37Rv).